We begin with the raw amino-acid sequence, 182 residues long: Probable RNA 2'-phosphotransferase (182 aa).

The protein belongs to the KptA/TPT1 family.

Removes the 2'-phosphate from RNA via an intermediate in which the phosphate is ADP-ribosylated by NAD followed by a presumed transesterification to release the RNA and generate ADP-ribose 1''-2''-cyclic phosphate (APPR&gt;P). May function as an ADP-ribosylase. In Trichormus variabilis (strain ATCC 29413 / PCC 7937) (Anabaena variabilis), this protein is Probable RNA 2'-phosphotransferase.